The following is a 640-amino-acid chain: Probable inactive receptor kinase At3g08680 (640 aa).

A signal peptide spans 1–22; that stretch reads MMKIIAAFLFLLVTTFVSRCLS. 5 LRR repeats span residues 93 to 115, 117 to 138, 139 to 162, 163 to 185, and 186 to 206; these read ALRIISLRSNHLQGNIPSVILSL, FIRSLYFHENNFSGTIPPVLSH, RLVNLDLSANSLSGNIPTSLQNLT, QLTDLSLQNNSLSGPIPNLPPRL, and KYLNLSFNNLNGSVPSSVKSF. The interval 222–249 is disordered; the sequence is LTPCPENTTAPSPSPTTPTEGPGTTNIG. Over residues 226–247 the composition is skewed to low complexity; it reads PENTTAPSPSPTTPTEGPGTTN. A helical membrane pass occupies residues 260–280; it reads GAIVGIAVGGSVLLFIILAII. A disordered region spans residues 289–315; that stretch reads DGGQDSTAVPKAKPGRSDNKAEEFGSG. Residues 341-614 enclose the Protein kinase domain; sequence RASAEVLGKG…EEVVNMMEEI (274 aa). Serine 343 carries the post-translational modification Phosphoserine. Residue 347–355 coordinates ATP; it reads LGKGSYGTT. Residue threonine 364 is modified to Phosphothreonine. Lysine 369 contributes to the ATP binding site. 3 positions are modified to phosphothreonine: threonine 441, threonine 514, and threonine 564. Positions 612-640 are disordered; sequence EEIRPSGSGPGSGNRASSPEMIRSSDSPV.

This sequence belongs to the protein kinase superfamily. Tyr protein kinase family.

It localises to the membrane. This chain is Probable inactive receptor kinase At3g08680, found in Arabidopsis thaliana (Mouse-ear cress).